A 226-amino-acid chain; its full sequence is Protein BASIC PENTACYSTEINE7 (226 aa).

The disordered stretch occupies residues 42-116 (IDLSQEPPAE…PSIPETKREK (75 aa)). Over residues 66-76 (RDSRNDTETVK) the composition is skewed to basic and acidic residues. The segment covering 88-105 (LKPKPQRKKRSVSNKSKK) has biased composition (basic residues).

Belongs to the BBR/BPC family. As to expression, expressed in seedlings, leaves and pistils. Detected in anthers, in pollen grains, in young rosette, in leaf vasculature, in the lateral and primary roots, in embryo sac, and in the whole ovule.

Its subcellular location is the nucleus. Transcriptional regulator that specifically binds to GA-rich elements (GAGA-repeats) present in regulatory sequences of genes involved in developmental processes. The protein is Protein BASIC PENTACYSTEINE7 (BPC7) of Arabidopsis thaliana (Mouse-ear cress).